We begin with the raw amino-acid sequence, 356 residues long: Vanillin synthase, chloroplastic (356 aa).

An N-linked (GlcNAc...) asparagine glycan is attached at Asn-122. 2 cysteine pairs are disulfide-bonded: Cys-159–Cys-202 and Cys-193–Cys-235. The active site involves Cys-162. A glycan (N-linked (GlcNAc...) asparagine) is linked at Asn-251. A disulfide bridge links Cys-293 with Cys-343. Residues His-302 and Asn-322 contribute to the active site.

It belongs to the peptidase C1 family. In terms of assembly, forms homodimers, homotrimers and homotetramers. As to expression, accumulates in the inner part of vanilla pods (at protein level). Expressed in single cells located a few cell layers from the inner epidermis.

The protein localises to the plastid. The protein resides in the chloroplast. The enzyme catalyses (E)-ferulate + H2O = vanillin + acetate. It catalyses the reaction 4-O-beta-D-glucosyl-trans-ferulate + H2O = 4-O-beta-D-glucosyl-vanillin + acetate. It participates in aromatic compound metabolism; phenylpropanoid biosynthesis. In terms of biological role, involved in the biosynthesis of vanillin (4-hydroxy-3-methoxy-benzaldehyde) and derivative natural products, key components of vanilla pods flavor. Catalyzes the double carbon bond cleavage of ferulic acid to vanillin and of their respective glucosides via a coupled non-oxidative hydratase/lyase reaction. Inactive toward p-coumaric acid, caffeic acid and their glucosides derivatives. The chain is Vanillin synthase, chloroplastic from Vanilla planifolia (Vanilla).